The primary structure comprises 355 residues: Mu-like prophage FluMu protein gp47 (355 aa).

Belongs to the Mu gp47/PBSX XkdT family.

This chain is Mu-like prophage FluMu protein gp47, found in Haemophilus influenzae (strain ATCC 51907 / DSM 11121 / KW20 / Rd).